A 343-amino-acid polypeptide reads, in one-letter code: S-adenosylmethionine:tRNA ribosyltransferase-isomerase (343 aa).

This sequence belongs to the QueA family. In terms of assembly, monomer.

The protein resides in the cytoplasm. The enzyme catalyses 7-aminomethyl-7-carbaguanosine(34) in tRNA + S-adenosyl-L-methionine = epoxyqueuosine(34) in tRNA + adenine + L-methionine + 2 H(+). The protein operates within tRNA modification; tRNA-queuosine biosynthesis. Functionally, transfers and isomerizes the ribose moiety from AdoMet to the 7-aminomethyl group of 7-deazaguanine (preQ1-tRNA) to give epoxyqueuosine (oQ-tRNA). This chain is S-adenosylmethionine:tRNA ribosyltransferase-isomerase, found in Geobacter sulfurreducens (strain ATCC 51573 / DSM 12127 / PCA).